A 98-amino-acid polypeptide reads, in one-letter code: Cystatin-A (98 aa).

Position 1 is an N-acetylmethionine (Met1). The short motif at 46–50 is the Secondary area of contact element; that stretch reads QVVAG.

The protein belongs to the cystatin family.

The protein resides in the cytoplasm. Its function is as follows. This is an intracellular thiol proteinase inhibitor. The polypeptide is Cystatin-A (CSTA) (Bos taurus (Bovine)).